The sequence spans 274 residues: Uridine-5'-phosphate dioxygenase (274 aa).

His-103, Asp-105, and His-246 together coordinate Fe cation.

Requires Fe(2+) as cofactor.

It catalyses the reaction UMP + 2-oxoglutarate + O2 = uridine-5'-aldehyde + succinate + phosphate + CO2. It participates in antibiotic biosynthesis. Inhibited by several divalent cations, including Zn(2+). In terms of biological role, dioxygenase involved in the biosynthesis of the lipopeptidyl nucleoside antibiotic A-90289. Catalyzes the dephosphorylation and oxidation of UMP to generate uridine-5'-aldehyde, the first intermediate in the biosynthesis of A-90289. The protein is Uridine-5'-phosphate dioxygenase of Streptomyces sp.